Consider the following 338-residue polypeptide: L-serine dehydratase (338 aa).

The residue at position 39 (Lys-39) is an N6-(pyridoxal phosphate)lysine.

It belongs to the serine/threonine dehydratase family. It depends on pyridoxal 5'-phosphate as a cofactor.

Its subcellular location is the cytoplasm. It catalyses the reaction L-serine = pyruvate + NH4(+). The protein operates within carbohydrate biosynthesis; gluconeogenesis. This chain is L-serine dehydratase (SDL1), found in Saccharomyces cerevisiae (strain RM11-1a) (Baker's yeast).